The chain runs to 314 residues: Dihydroorotate dehydrogenase B (NAD(+)), catalytic subunit (314 aa).

Residues Lys-55, 79 to 83 (NAMGL), and Asn-136 each bind substrate. 55–56 (KS) lines the FMN pocket. Position 136 (Asn-136) interacts with FMN. Cys-139 functions as the Nucleophile in the catalytic mechanism. The FMN site is built by Lys-174 and Ile-200. 201-202 (NT) lines the substrate pocket. FMN is bound by residues Gly-226, 252 to 253 (GG), and 274 to 275 (GS).

This sequence belongs to the dihydroorotate dehydrogenase family. Type 1 subfamily. As to quaternary structure, heterotetramer of 2 PyrK and 2 PyrD type B subunits. FMN is required as a cofactor.

Its subcellular location is the cytoplasm. It carries out the reaction (S)-dihydroorotate + NAD(+) = orotate + NADH + H(+). The protein operates within pyrimidine metabolism; UMP biosynthesis via de novo pathway; orotate from (S)-dihydroorotate (NAD(+) route): step 1/1. Functionally, catalyzes the conversion of dihydroorotate to orotate with NAD(+) as electron acceptor. The protein is Dihydroorotate dehydrogenase B (NAD(+)), catalytic subunit (pyrD) of Methanosarcina mazei (strain ATCC BAA-159 / DSM 3647 / Goe1 / Go1 / JCM 11833 / OCM 88) (Methanosarcina frisia).